A 100-amino-acid chain; its full sequence is Urease subunit gamma (100 aa).

This sequence belongs to the urease gamma subunit family. In terms of assembly, heterotrimer of UreA (gamma), UreB (beta) and UreC (alpha) subunits. Three heterotrimers associate to form the active enzyme.

It is found in the cytoplasm. The catalysed reaction is urea + 2 H2O + H(+) = hydrogencarbonate + 2 NH4(+). The protein operates within nitrogen metabolism; urea degradation; CO(2) and NH(3) from urea (urease route): step 1/1. The sequence is that of Urease subunit gamma from Rhizobium etli (strain ATCC 51251 / DSM 11541 / JCM 21823 / NBRC 15573 / CFN 42).